A 246-amino-acid chain; its full sequence is MADS-box transcription factor 14 (246 aa).

Residues 1-61 (MGRGKVQLKR…GKLYKYATDS (61 aa)) form the MADS-box domain. Residues 88 to 178 (QGNWCHEYRK…QKELVEKQKV (91 aa)) enclose the K-box domain. Residues 180-199 (KQQVQWDQTQPQTSSSSSSF) are disordered.

Highly expressed in sterile lemmas, at intermediate levels in stamens, and weakly in lemmas, paleas and carpels.

It localises to the nucleus. Probable transcription factor. In Oryza sativa subsp. indica (Rice), this protein is MADS-box transcription factor 14 (MADS14).